The chain runs to 428 residues: Enolase 2 (428 aa).

Residue Gln-162 participates in (2R)-2-phosphoglycerate binding. The active-site Proton donor is the Glu-204. The Mg(2+) site is built by Asp-241, Glu-285, and Asp-312. 4 residues coordinate (2R)-2-phosphoglycerate: Lys-337, Arg-366, Ser-367, and Lys-388. The Proton acceptor role is filled by Lys-337.

The protein belongs to the enolase family. Mg(2+) serves as cofactor.

It is found in the cytoplasm. It localises to the secreted. The protein localises to the cell surface. It catalyses the reaction (2R)-2-phosphoglycerate = phosphoenolpyruvate + H2O. The protein operates within carbohydrate degradation; glycolysis; pyruvate from D-glyceraldehyde 3-phosphate: step 4/5. Catalyzes the reversible conversion of 2-phosphoglycerate (2-PG) into phosphoenolpyruvate (PEP). It is essential for the degradation of carbohydrates via glycolysis. This Lactobacillus johnsonii (strain CNCM I-12250 / La1 / NCC 533) protein is Enolase 2.